Consider the following 169-residue polypeptide: MPEVDRFGRLPWLWITVLVFVLDQLSKAFFQAELSMYQQIVVIPDLFSWTLAYNTGAAFSFLADSSGWQRWLFALIAIVVSAILVVWLKRLKKGETWLAIALALVLGGALGNLYDRMVLGHVVDFILVHWQNRWYFPAFNLADSAITVGAVMLALDMFRSKKSGEAAHG.

4 helical membrane passes run Leu-10–Phe-30, Ile-40–Ser-60, Trp-68–Leu-88, and Gly-94–Tyr-114. Residues Asp-124 and Asp-143 contribute to the active site. The helical transmembrane segment at Tyr-135–Leu-155 threads the bilayer.

The protein belongs to the peptidase A8 family.

It localises to the cell inner membrane. The enzyme catalyses Release of signal peptides from bacterial membrane prolipoproteins. Hydrolyzes -Xaa-Yaa-Zaa-|-(S,diacylglyceryl)Cys-, in which Xaa is hydrophobic (preferably Leu), and Yaa (Ala or Ser) and Zaa (Gly or Ala) have small, neutral side chains.. It functions in the pathway protein modification; lipoprotein biosynthesis (signal peptide cleavage). This protein specifically catalyzes the removal of signal peptides from prolipoproteins. The sequence is that of Lipoprotein signal peptidase from Pseudomonas aeruginosa (strain UCBPP-PA14).